The following is a 525-amino-acid chain: Ribosomal protein S6 kinase beta-1 (525 aa).

The segment at 1-54 (MRRRRRRDGFYPAPDFRDREAEDMAGVFDIDLDQPEDAGSEDELEEGGQLNESM) is disordered. The short motif at 28–32 (FDIDL) is the TOS motif element. Residues 30–46 (IDLDQPEDAGSEDELEE) show a composition bias toward acidic residues. The Protein kinase domain maps to 91–352 (FELLRVLGKG…AGEVQAHPFF (262 aa)). Residues 97-105 (LGKGGYGKV) and Lys-123 contribute to the ATP site. The active-site Proton acceptor is the Asp-218. Residue Thr-252 is modified to Phosphothreonine; by PDPK1. The 71-residue stretch at 353 to 423 (RHINWEELLA…VAPSVLESVK (71 aa)) folds into the AGC-kinase C-terminal domain. The interval 380–399 (SQFDSKFTRQTPVDSPDDST) is disordered. The span at 381–399 (QFDSKFTRQTPVDSPDDST) shows a compositional bias: polar residues. At Ser-394 the chain carries Phosphoserine. A Phosphothreonine; by MTOR, NEK6 and NEK7 modification is found at Thr-412. Residues 424–525 (EKFSFEPKIR…KRPEHLRMNL (102 aa)) form an autoinhibitory domain region. A phosphoserine mark is found at Ser-434 and Ser-441. The residue at position 444 (Thr-444) is a Phosphothreonine. 2 positions are modified to phosphoserine: Ser-447 and Ser-452. The tract at residues 486 to 509 (VTTSGEASAPLPIRQPNSGPYKKQ) is disordered. An N6-acetyllysine modification is found at Lys-516.

The protein belongs to the protein kinase superfamily. AGC Ser/Thr protein kinase family. S6 kinase subfamily. Interacts with PPP1R9A/neurabin-1. Interacts with RPTOR. Interacts with IRS1. Interacts with EIF3B and EIF3C. Interacts with TRAF4. Interacts with POLDIP3. Interacts (via N-terminus) with IER5. Phosphorylation at Thr-412 is regulated by mTORC1. The phosphorylation at this site is maintained by an agonist-dependent autophosphorylation mechanism. Activated by phosphorylation at Thr-252 by PDPK1. Dephosphorylation by PPP1CC at Thr-412 in mitochondrion.

It is found in the cytoplasm. Its subcellular location is the synapse. It localises to the synaptosome. The protein resides in the mitochondrion outer membrane. The protein localises to the mitochondrion. It catalyses the reaction L-seryl-[protein] + ATP = O-phospho-L-seryl-[protein] + ADP + H(+). The catalysed reaction is L-threonyl-[protein] + ATP = O-phospho-L-threonyl-[protein] + ADP + H(+). Its activity is regulated as follows. Activation requires multiple phosphorylation events on serine/threonine residues. Activation appears to be first mediated by phosphorylation of multiple sites in the autoinhibitory domain, which facilitates phosphorylation at Thr-412, disrupting the autoinhibitory mechanism and allowing phosphorylation of Thr-252 by PDPK1. The active conformation of the kinase is believed to be stabilized by a mechanism involving three conserved phosphorylation sites located in the kinase domain activation loop (Thr-252) and in the AGC-kinase C-terminal domain (Ser-394 in the middle of the tail/linker region and Thr-412 within a hydrophobic motif at its end). Activated by mTORC1; isoform Alpha I and isoform Alpha II are sensitive to rapamycin, which inhibits activating phosphorylation at Thr-412. Activated by PDPK1. Its function is as follows. Serine/threonine-protein kinase that acts downstream of mTOR signaling in response to growth factors and nutrients to promote cell proliferation, cell growth and cell cycle progression. Regulates protein synthesis through phosphorylation of EIF4B, RPS6 and EEF2K, and contributes to cell survival by repressing the pro-apoptotic function of BAD. Under conditions of nutrient depletion, the inactive form associates with the EIF3 translation initiation complex. Upon mitogenic stimulation, phosphorylation by the mechanistic target of rapamycin complex 1 (mTORC1) leads to dissociation from the EIF3 complex and activation. The active form then phosphorylates and activates several substrates in the pre-initiation complex, including the EIF2B complex and the cap-binding complex component EIF4B. Also controls translation initiation by phosphorylating a negative regulator of EIF4A, PDCD4, targeting it for ubiquitination and subsequent proteolysis. Promotes initiation of the pioneer round of protein synthesis by phosphorylating POLDIP3/SKAR. In response to IGF1, activates translation elongation by phosphorylating EEF2 kinase (EEF2K), which leads to its inhibition and thus activation of EEF2. Also plays a role in feedback regulation of mTORC2 by mTORC1 by phosphorylating MAPKAP1/SIN1, MTOR and RICTOR, resulting in the inhibition of mTORC2 and AKT1 signaling. Also involved in feedback regulation of mTORC1 and mTORC2 by phosphorylating DEPTOR. Mediates cell survival by phosphorylating the pro-apoptotic protein BAD and suppressing its pro-apoptotic function. Phosphorylates mitochondrial URI1 leading to dissociation of a URI1-PPP1CC complex. The free mitochondrial PPP1CC can then dephosphorylate RPS6KB1 at Thr-412, which is proposed to be a negative feedback mechanism for the RPS6KB1 anti-apoptotic function. Mediates TNF-alpha-induced insulin resistance by phosphorylating IRS1 at multiple serine residues, resulting in accelerated degradation of IRS1. In cells lacking functional TSC1-2 complex, constitutively phosphorylates and inhibits GSK3B. May be involved in cytoskeletal rearrangement through binding to neurabin. Phosphorylates and activates the pyrimidine biosynthesis enzyme CAD, downstream of MTOR. Following activation by mTORC1, phosphorylates EPRS and thereby plays a key role in fatty acid uptake by adipocytes and also most probably in interferon-gamma-induced translation inhibition. The chain is Ribosomal protein S6 kinase beta-1 (RPS6KB1) from Oryctolagus cuniculus (Rabbit).